The primary structure comprises 310 residues: Ribosomal RNA small subunit methyltransferase H (310 aa).

S-adenosyl-L-methionine is bound by residues 32-34, Asp-52, Phe-79, Asp-100, and Gln-107; that span reads GGH.

Belongs to the methyltransferase superfamily. RsmH family.

It localises to the cytoplasm. The enzyme catalyses cytidine(1402) in 16S rRNA + S-adenosyl-L-methionine = N(4)-methylcytidine(1402) in 16S rRNA + S-adenosyl-L-homocysteine + H(+). Specifically methylates the N4 position of cytidine in position 1402 (C1402) of 16S rRNA. The protein is Ribosomal RNA small subunit methyltransferase H of Bacillus thuringiensis subsp. konkukian (strain 97-27).